The chain runs to 353 residues: MTIALGRFTKEENDLFDIMDDWLRRDRFVFVGWSGLLLFPCAYFALGGWFTGTTFVTSWYTHGLASSYLEGCNFLTAAVSTPANSLAHSLLLLWGPEAQGDFTRWCQLGGLWTFVALHGAFGLIGFMLRQFELARSVQLRPYNAIAFSAPIAVFVSVFLIYPLGQSGWFFAPSFGVAAIFRFILFFQGFHNWTLNPFHMMGVAGVLGAALLCAIHGATVENTLFEDGDGANTFRAFNPTQAEETYSMVTANRFWSQIFGVAFSNKRWLHFFMLFVPVTGLWMSALGVVGLALNLRAYDFVSQEIRAAEDPEFETFYTKNILLNEGIRAWMAAQDQPHENLIFPEEVLPRGNAL.

T2 carries the post-translational modification N-acetylthreonine. A Phosphothreonine modification is found at T2. A helical transmembrane segment spans residues 41-61 (CAYFALGGWFTGTTFVTSWYT). Chlorophyll a is bound at residue H118. The chain crosses the membrane as a helical span at residues 125–141 (GFMLRQFELARSVQLRP). Pheophytin a is bound by residues Q130 and N143. Residues 153-166 (VFVSVFLIYPLGQS) form a helical membrane-spanning segment. H198 contributes to the chlorophyll a binding site. Residues 208–228 (AALLCAIHGATVENTLFEDGD) traverse the membrane as a helical segment. The a plastoquinone site is built by H215 and F262. H215 contacts Fe cation. H269 serves as a coordination point for Fe cation. A helical transmembrane segment spans residues 279 to 295 (GLWMSALGVVGLALNLR).

The protein belongs to the reaction center PufL/M/PsbA/D family. PSII is composed of 1 copy each of membrane proteins PsbA, PsbB, PsbC, PsbD, PsbE, PsbF, PsbH, PsbI, PsbJ, PsbK, PsbL, PsbM, PsbT, PsbX, PsbY, PsbZ, Psb30/Ycf12, at least 3 peripheral proteins of the oxygen-evolving complex and a large number of cofactors. It forms dimeric complexes. Requires The D1/D2 heterodimer binds P680, chlorophylls that are the primary electron donor of PSII, and subsequent electron acceptors. It shares a non-heme iron and each subunit binds pheophytin, quinone, additional chlorophylls, carotenoids and lipids. There is also a Cl(-1) ion associated with D1 and D2, which is required for oxygen evolution. The PSII complex binds additional chlorophylls, carotenoids and specific lipids. as cofactor.

It localises to the plastid. The protein localises to the chloroplast thylakoid membrane. The catalysed reaction is 2 a plastoquinone + 4 hnu + 2 H2O = 2 a plastoquinol + O2. Photosystem II (PSII) is a light-driven water:plastoquinone oxidoreductase that uses light energy to abstract electrons from H(2)O, generating O(2) and a proton gradient subsequently used for ATP formation. It consists of a core antenna complex that captures photons, and an electron transfer chain that converts photonic excitation into a charge separation. The D1/D2 (PsbA/PsbD) reaction center heterodimer binds P680, the primary electron donor of PSII as well as several subsequent electron acceptors. D2 is needed for assembly of a stable PSII complex. This Nuphar advena (Common spatterdock) protein is Photosystem II D2 protein.